Here is a 261-residue protein sequence, read N- to C-terminus: Thiazole synthase (261 aa).

The Schiff-base intermediate with DXP role is filled by Lys-102. Residues Gly-163, 189-190 (AG), and 211-212 (NT) contribute to the 1-deoxy-D-xylulose 5-phosphate site.

Belongs to the ThiG family. As to quaternary structure, homotetramer. Forms heterodimers with either ThiH or ThiS.

It localises to the cytoplasm. The enzyme catalyses [ThiS sulfur-carrier protein]-C-terminal-Gly-aminoethanethioate + 2-iminoacetate + 1-deoxy-D-xylulose 5-phosphate = [ThiS sulfur-carrier protein]-C-terminal Gly-Gly + 2-[(2R,5Z)-2-carboxy-4-methylthiazol-5(2H)-ylidene]ethyl phosphate + 2 H2O + H(+). The protein operates within cofactor biosynthesis; thiamine diphosphate biosynthesis. Its function is as follows. Catalyzes the rearrangement of 1-deoxy-D-xylulose 5-phosphate (DXP) to produce the thiazole phosphate moiety of thiamine. Sulfur is provided by the thiocarboxylate moiety of the carrier protein ThiS. In vitro, sulfur can be provided by H(2)S. The chain is Thiazole synthase from Acinetobacter baylyi (strain ATCC 33305 / BD413 / ADP1).